A 265-amino-acid polypeptide reads, in one-letter code: Hydroxyethylthiazole kinase 2 (265 aa).

Residue Met39 participates in substrate binding. ATP contacts are provided by Lys115 and Thr168. Gly195 is a binding site for substrate.

It belongs to the Thz kinase family. It depends on Mg(2+) as a cofactor.

The catalysed reaction is 5-(2-hydroxyethyl)-4-methylthiazole + ATP = 4-methyl-5-(2-phosphooxyethyl)-thiazole + ADP + H(+). It functions in the pathway cofactor biosynthesis; thiamine diphosphate biosynthesis; 4-methyl-5-(2-phosphoethyl)-thiazole from 5-(2-hydroxyethyl)-4-methylthiazole: step 1/1. Functionally, catalyzes the phosphorylation of the hydroxyl group of 4-methyl-5-beta-hydroxyethylthiazole (THZ). In Clostridium botulinum (strain 657 / Type Ba4), this protein is Hydroxyethylthiazole kinase 2.